The chain runs to 446 residues: 3-phosphoshikimate 1-carboxyvinyltransferase (446 aa).

3-phosphoshikimate-binding residues include K21, S22, and R26. K21 contributes to the phosphoenolpyruvate binding site. The phosphoenolpyruvate site is built by G94 and R122. The 3-phosphoshikimate site is built by S167, Q169, D315, and K342. A phosphoenolpyruvate-binding site is contributed by Q169. D315 acts as the Proton acceptor in catalysis. Phosphoenolpyruvate-binding residues include R346 and R388.

Belongs to the EPSP synthase family. As to quaternary structure, monomer.

Its subcellular location is the cytoplasm. The catalysed reaction is 3-phosphoshikimate + phosphoenolpyruvate = 5-O-(1-carboxyvinyl)-3-phosphoshikimate + phosphate. It participates in metabolic intermediate biosynthesis; chorismate biosynthesis; chorismate from D-erythrose 4-phosphate and phosphoenolpyruvate: step 6/7. Functionally, catalyzes the transfer of the enolpyruvyl moiety of phosphoenolpyruvate (PEP) to the 5-hydroxyl of shikimate-3-phosphate (S3P) to produce enolpyruvyl shikimate-3-phosphate and inorganic phosphate. This chain is 3-phosphoshikimate 1-carboxyvinyltransferase, found in Alkalilimnicola ehrlichii (strain ATCC BAA-1101 / DSM 17681 / MLHE-1).